A 364-amino-acid chain; its full sequence is tRNA-specific 2-thiouridylase MnmA 2 (364 aa).

Residues 10–17 (GMSGGVDS) and Met-36 each bind ATP. Cys-106 acts as the Nucleophile in catalysis. An intrachain disulfide couples Cys-106 to Cys-204. Gly-130 serves as a coordination point for ATP. The interaction with tRNA stretch occupies residues 154–156 (KDQ). Catalysis depends on Cys-204, which acts as the Cysteine persulfide intermediate. An interaction with tRNA region spans residues 310-311 (RY).

It belongs to the MnmA/TRMU family.

Its subcellular location is the cytoplasm. It carries out the reaction S-sulfanyl-L-cysteinyl-[protein] + uridine(34) in tRNA + AH2 + ATP = 2-thiouridine(34) in tRNA + L-cysteinyl-[protein] + A + AMP + diphosphate + H(+). Its function is as follows. Catalyzes the 2-thiolation of uridine at the wobble position (U34) of tRNA, leading to the formation of s(2)U34. The sequence is that of tRNA-specific 2-thiouridylase MnmA 2 from Thermoanaerobacter pseudethanolicus (strain ATCC 33223 / 39E) (Clostridium thermohydrosulfuricum).